The primary structure comprises 306 residues: MSKASKTAAADASITTGSARVKRGFADKLKGGVIMDVVTPEQAKIAEDAGASAVMALERVPADIRAQGGVSRMSDPDMIAGIIDAVEIPVMAKARIGHFVEAEVLEALGVDFIDESEVLSPADYKNHIDKFDFETPFVCGATNLGEALRRINEGAAMIRSKGEAGTGDVSNAVTHMRTIRAEINRLSNMAEDELYVAAKELAAPYELVVEVARNGKLPVTLFTAGGIATPADAAMMMHLGAEGVFVGSGIFKSGNPAQRAAAIVKATQNYQDPKVIADVSRGLGEAMVGINVDELPVSHRLAERGW.

Asp36 is a binding site for D-ribose 5-phosphate. Lys93 serves as the catalytic Schiff-base intermediate with D-ribose 5-phosphate. Gly165 serves as a coordination point for D-ribose 5-phosphate. Residue Arg177 coordinates D-glyceraldehyde 3-phosphate. D-ribose 5-phosphate-binding positions include Gly226 and Gly247–Ser248.

It belongs to the PdxS/SNZ family. In terms of assembly, in the presence of PdxT, forms a dodecamer of heterodimers.

It catalyses the reaction aldehydo-D-ribose 5-phosphate + D-glyceraldehyde 3-phosphate + L-glutamine = pyridoxal 5'-phosphate + L-glutamate + phosphate + 3 H2O + H(+). Its pathway is cofactor biosynthesis; pyridoxal 5'-phosphate biosynthesis. Functionally, catalyzes the formation of pyridoxal 5'-phosphate from ribose 5-phosphate (RBP), glyceraldehyde 3-phosphate (G3P) and ammonia. The ammonia is provided by the PdxT subunit. Can also use ribulose 5-phosphate and dihydroxyacetone phosphate as substrates, resulting from enzyme-catalyzed isomerization of RBP and G3P, respectively. The chain is Pyridoxal 5'-phosphate synthase subunit PdxS from Corynebacterium urealyticum (strain ATCC 43042 / DSM 7109).